Reading from the N-terminus, the 745-residue chain is Mitogen-activated protein kinase kinase kinase zak-1 (745 aa).

Residues 31–305 enclose the Protein kinase domain; it reads IQVGDHIGVG…KVMDECEKFM (275 aa). ATP-binding positions include 37–45 and K63; that span reads IGVGTFGAV. Catalysis depends on D159, which acts as the Proton acceptor. Positions 307 to 352 form a coiled coil; it reads LEDWKTEIEKQEKNVEKMRKDLEKRREQLEIREKALKQRMKVEQAV. Residues 366-438 form the SAM domain; sequence WSEHHTSHWV…MKMIRKLADT (73 aa). The disordered stretch occupies residues 693 to 745; that stretch reads LTRRRRTTTTNSEDTEKSDTNNKTPESQARRVHVHGGKDKWNWKKGKSRPKFT. A compositionally biased stretch (basic residues) spans 735–745; that stretch reads WKKGKSRPKFT.

This sequence belongs to the protein kinase superfamily. STE Ser/Thr protein kinase family. MAP kinase kinase kinase subfamily. Mg(2+) is required as a cofactor. As to expression, widely expressed; expressed in most tissues, including intestines, muscle and the nervous system.

The protein localises to the cytoplasm. It localises to the nucleus. The catalysed reaction is L-seryl-[protein] + ATP = O-phospho-L-seryl-[protein] + ADP + H(+). It catalyses the reaction L-threonyl-[protein] + ATP = O-phospho-L-threonyl-[protein] + ADP + H(+). In terms of biological role, stress-activated component of a protein kinase signal transduction cascade that promotes programmed cell death in response to ribotoxic stress. Acts as the proximal sensor of ribotoxic stress: directly binds to the ribosome, thereby acting as a sentinel for colliding ribosomes. Upon ribosome collisions, activates the stress-activated protein kinase signal transduction cascade, leading to programmed cell death. Acts by catalyzing phosphorylation of MAP kinase kinases, leading to activation of the JNK and MAP kinase p38 pathways. This is Mitogen-activated protein kinase kinase kinase zak-1 from Caenorhabditis elegans.